We begin with the raw amino-acid sequence, 452 residues long: Glutamyl-tRNA(Gln) amidotransferase subunit A (452 aa).

Active-site charge relay system residues include K56 and S131. Catalysis depends on S155, which acts as the Acyl-ester intermediate.

The protein belongs to the amidase family. GatA subfamily. Heterotrimer of A, B and C subunits.

It carries out the reaction L-glutamyl-tRNA(Gln) + L-glutamine + ATP + H2O = L-glutaminyl-tRNA(Gln) + L-glutamate + ADP + phosphate + H(+). Its function is as follows. Allows the formation of correctly charged Gln-tRNA(Gln) through the transamidation of misacylated Glu-tRNA(Gln) in organisms which lack glutaminyl-tRNA synthetase. The reaction takes place in the presence of glutamine and ATP through an activated gamma-phospho-Glu-tRNA(Gln). The chain is Glutamyl-tRNA(Gln) amidotransferase subunit A from Campylobacter curvus (strain 525.92).